Reading from the N-terminus, the 559-residue chain is Membrane protein insertase YidC (559 aa).

The chain crosses the membrane as a helical span at residues 6–26; it reads TVLWMIFSFSLLLLWNNWQIH. The segment at 34–80 is disordered; that stretch reads GGPSPEQNAPATANNQAATNPASNTPAVPNAPAATSAPSSVPGSTAP. The span at 42–80 shows a compositional bias: low complexity; that stretch reads APATANNQAATNPASNTPAVPNAPAATSAPSSVPGSTAP. The next 4 membrane-spanning stretches (helical) occupy residues 367–387, 441–461, 480–500, and 510–530; these read LLGNWGWTIVALTVIIKAVFY, LPMVVQIPVFIALYWVLLASV, PYFILPAVMMATMFLQIKLNP, and VMMVMPLVFGGMMFFFPAGLV.

This sequence belongs to the OXA1/ALB3/YidC family. Type 1 subfamily. Interacts with the Sec translocase complex via SecD. Specifically interacts with transmembrane segments of nascent integral membrane proteins during membrane integration.

Its subcellular location is the cell inner membrane. In terms of biological role, required for the insertion and/or proper folding and/or complex formation of integral membrane proteins into the membrane. Involved in integration of membrane proteins that insert both dependently and independently of the Sec translocase complex, as well as at least some lipoproteins. Aids folding of multispanning membrane proteins. This is Membrane protein insertase YidC from Bordetella avium (strain 197N).